Here is a 433-residue protein sequence, read N- to C-terminus: MTSTVESLSSVKKKISFEIPAERVSAEIEKVFGQIQKRAAIKGFRKGKVPRSLVEQNYRSMMESDVLKNLFDETYFKALADHKIFPVSHPHIESDEVKRGEALKYSATVEVFPEIDVKDYKGLEVKRERFVSDVAPVEARLNEMREGMAELKPLEEGKCAETGNFVVIDFVGSVDGIPFEGGAAESYQLELGSGRFIPGFEDQLVGVKAGEQRTVEVTFPEEYGNKDLAGKAASFAVTVKEAKVKELPELDDEFAMQFGEFETLEQLKTKLAELHKDQETARIKADVQDRIVKALIGNNEIEVPSTLVERQLQMMLSNMKNRLAQQRLSLEMMGMDDESFKTHYRDSAESQVKGSLLLEAVAKKEGITVNDPDVEAKLRAMAEEAGQDFDRVKDFYEQNHNAKENLVAHLNEEKVLGYLLENAVVTEVAKDEL.

One can recognise a PPIase FKBP-type domain in the interval 163-248; that stretch reads GNFVVIDFVG…VKEAKVKELP (86 aa).

It belongs to the FKBP-type PPIase family. Tig subfamily.

The protein resides in the cytoplasm. It catalyses the reaction [protein]-peptidylproline (omega=180) = [protein]-peptidylproline (omega=0). Its function is as follows. Involved in protein export. Acts as a chaperone by maintaining the newly synthesized protein in an open conformation. Functions as a peptidyl-prolyl cis-trans isomerase. This is Trigger factor from Geobacter metallireducens (strain ATCC 53774 / DSM 7210 / GS-15).